A 325-amino-acid polypeptide reads, in one-letter code: NADH-quinone oxidoreductase subunit H (325 aa).

The next 9 helical transmembrane spans lie at I11–F31, S50–F69, L81–V101, I114–G134, L154–F174, L186–V206, F237–F257, L265–V285, and I304–A324.

This sequence belongs to the complex I subunit 1 family. As to quaternary structure, NDH-1 is composed of 13 different subunits. Subunits NuoA, H, J, K, L, M, N constitute the membrane sector of the complex.

The protein localises to the cell inner membrane. The enzyme catalyses a quinone + NADH + 5 H(+)(in) = a quinol + NAD(+) + 4 H(+)(out). Functionally, NDH-1 shuttles electrons from NADH, via FMN and iron-sulfur (Fe-S) centers, to quinones in the respiratory chain. The immediate electron acceptor for the enzyme in this species is believed to be ubiquinone. Couples the redox reaction to proton translocation (for every two electrons transferred, four hydrogen ions are translocated across the cytoplasmic membrane), and thus conserves the redox energy in a proton gradient. This subunit may bind ubiquinone. This is NADH-quinone oxidoreductase subunit H from Edwardsiella ictaluri (strain 93-146).